A 466-amino-acid polypeptide reads, in one-letter code: Cysteine--tRNA ligase (466 aa).

Cys-27 lines the Zn(2+) pocket. Residues 29–39 (PTVYNYFHIGN) carry the 'HIGH' region motif. Residues Cys-207, His-232, and Glu-236 each contribute to the Zn(2+) site. A 'KMSKS' region motif is present at residues 264 to 268 (KMSKS). Lys-267 provides a ligand contact to ATP.

Belongs to the class-I aminoacyl-tRNA synthetase family. As to quaternary structure, monomer. The cofactor is Zn(2+).

It localises to the cytoplasm. The enzyme catalyses tRNA(Cys) + L-cysteine + ATP = L-cysteinyl-tRNA(Cys) + AMP + diphosphate. This is Cysteine--tRNA ligase from Clostridium novyi (strain NT).